A 160-amino-acid chain; its full sequence is UPF0262 protein ELI_10965 (160 aa).

This sequence belongs to the UPF0262 family.

This is UPF0262 protein ELI_10965 from Erythrobacter litoralis (strain HTCC2594).